Consider the following 76-residue polypeptide: Esculentin-2-ALa (76 aa).

The signal sequence occupies residues 1-22 (MFTLKKSMLLLFFLGTISLSLC). Residues 23-39 (EEERNADEDDGEKEVKR) constitute a propeptide that is removed on maturation. Cysteine 70 and cysteine 76 form a disulfide bridge.

In terms of tissue distribution, expressed by the skin glands.

It localises to the secreted. Functionally, antimicrobial peptide with activity against Gram-positive and Gram-negative bacteria and against fungi. Has been tested against S.aureus (MIC=2.5 ug/mL), B.pumilus (MIC=2.5 ug/mL), B.cereus (MIC=7.5 ug/mL), E.coli (MIC=12.5 ug/mL), B.dysenteriae (MIC=7.5 ug/mL), A.cacoaceticus (MIC=25.0 ug/mL), P.aeruginosa (MIC=50.0 ug/mL) and C.albicans (MIC=2.5 ug/mL). Also shows a weak hemolytic activity. The protein is Esculentin-2-ALa of Amolops loloensis (Lolokou Sucker Frog).